The chain runs to 183 residues: Crossover junction endodeoxyribonuclease RuvC (183 aa).

Active-site residues include Asp7, Glu66, and Asp138. Asp7, Glu66, and Asp138 together coordinate Mg(2+).

The protein belongs to the RuvC family. Homodimer which binds Holliday junction (HJ) DNA. The HJ becomes 2-fold symmetrical on binding to RuvC with unstacked arms; it has a different conformation from HJ DNA in complex with RuvA. In the full resolvosome a probable DNA-RuvA(4)-RuvB(12)-RuvC(2) complex forms which resolves the HJ. Mg(2+) serves as cofactor.

Its subcellular location is the cytoplasm. It catalyses the reaction Endonucleolytic cleavage at a junction such as a reciprocal single-stranded crossover between two homologous DNA duplexes (Holliday junction).. In terms of biological role, the RuvA-RuvB-RuvC complex processes Holliday junction (HJ) DNA during genetic recombination and DNA repair. Endonuclease that resolves HJ intermediates. Cleaves cruciform DNA by making single-stranded nicks across the HJ at symmetrical positions within the homologous arms, yielding a 5'-phosphate and a 3'-hydroxyl group; requires a central core of homology in the junction. The consensus cleavage sequence is 5'-(A/T)TT(C/G)-3'. Cleavage occurs on the 3'-side of the TT dinucleotide at the point of strand exchange. HJ branch migration catalyzed by RuvA-RuvB allows RuvC to scan DNA until it finds its consensus sequence, where it cleaves and resolves the cruciform DNA. The sequence is that of Crossover junction endodeoxyribonuclease RuvC from Burkholderia ambifaria (strain MC40-6).